A 211-amino-acid polypeptide reads, in one-letter code: dITP/XTP pyrophosphatase (211 aa).

Residue 7 to 12 (TSNKKK) coordinates substrate. Residues E43 and D72 each contribute to the Mg(2+) site. The Proton acceptor role is filled by D72. Residues S73, 169 to 172 (FGYD), K190, and 195 to 196 (HR) each bind substrate.

This sequence belongs to the HAM1 NTPase family. In terms of assembly, homodimer. Mg(2+) is required as a cofactor.

The catalysed reaction is XTP + H2O = XMP + diphosphate + H(+). The enzyme catalyses dITP + H2O = dIMP + diphosphate + H(+). It carries out the reaction ITP + H2O = IMP + diphosphate + H(+). In terms of biological role, pyrophosphatase that catalyzes the hydrolysis of nucleoside triphosphates to their monophosphate derivatives, with a high preference for the non-canonical purine nucleotides XTP (xanthosine triphosphate), dITP (deoxyinosine triphosphate) and ITP. Seems to function as a house-cleaning enzyme that removes non-canonical purine nucleotides from the nucleotide pool, thus preventing their incorporation into DNA/RNA and avoiding chromosomal lesions. The sequence is that of dITP/XTP pyrophosphatase from Hydrogenobaculum sp. (strain Y04AAS1).